A 201-amino-acid chain; its full sequence is Translation machinery-associated protein 22 (201 aa).

The 72-residue stretch at 94-165 folds into the SUI1 domain; sequence VTIKRIERNK…EARAYIEKLL (72 aa).

Belongs to the DENR family. Interacts with the 40S ribosomal subunit.

The protein resides in the cytoplasm. This Meyerozyma guilliermondii (strain ATCC 6260 / CBS 566 / DSM 6381 / JCM 1539 / NBRC 10279 / NRRL Y-324) (Yeast) protein is Translation machinery-associated protein 22 (TMA22).